We begin with the raw amino-acid sequence, 250 residues long: MPRYKLVVEYDGSGFAGWQRQAADRTVQQALEEAIARFAGAPVRVHCAGRTDAGVHATHQVVHLDLDRDWRTDTVRDASNAHLRPEPVAVVSAERVRPDFDARHSALRRHYRYRILNRRSPPALGRAYLWHVPWSLDAHAMHAAAQTLLGRHDFSAFRAAECQANSPVRTLDQLDVARIGDEILVATSARSFLHHQVRGMVGTLMLAGCGRLDAAGVRAVLDSRDRTRCGPLAPAAGLTLTGVDYPEPGP.

The Nucleophile role is filled by Asp-52. Tyr-111 is a binding site for substrate.

This sequence belongs to the tRNA pseudouridine synthase TruA family. Homodimer.

The enzyme catalyses uridine(38/39/40) in tRNA = pseudouridine(38/39/40) in tRNA. Functionally, formation of pseudouridine at positions 38, 39 and 40 in the anticodon stem and loop of transfer RNAs. This Methylobacterium sp. (strain 4-46) protein is tRNA pseudouridine synthase A.